The primary structure comprises 186 residues: Membrane protein Rv1476 (186 aa).

The helical transmembrane segment at 138–158 (FPWSALTIVLLIGVLAAAVGA) threads the bilayer. The disordered stretch occupies residues 166 to 186 (RRSATSTDAAPGAGDDLNQGV).

It is found in the membrane. Functionally, may affect the expression of genes linked to host macrophage apoptosis and immune response, thereby promoting the survival of M.tuberculosis in host macrophages. Overexpression of the gene increases susceptibility of the bacteria to various stresses, but promotes intracellular survival in host macrophages. It has no impact on the growth rate in vitro. Overexpression causes changes in the transcriptome of THP-1 cells, including expression of genes involved in cell proliferation, fatty acid degradation, cytokine-cytokine receptor interaction and immune response pathways. This Mycobacterium tuberculosis (strain ATCC 25618 / H37Rv) protein is Membrane protein Rv1476.